The sequence spans 608 residues: Threonine--tRNA ligase (608 aa).

The segment at 1-143 is editing domain; that stretch reads MRVLYIHAER…VFKPEEAKTE (143 aa). 2 catalytic regions span residues 194–490 and 195–490; these read PKYL…PRLP and KYLD…PRLP. Residues Cys-287, His-338, and His-459 each contribute to the Zn(2+) site.

Belongs to the class-II aminoacyl-tRNA synthetase family. Homodimer. Zn(2+) is required as a cofactor.

The protein resides in the cytoplasm. The enzyme catalyses tRNA(Thr) + L-threonine + ATP = L-threonyl-tRNA(Thr) + AMP + diphosphate + H(+). Functionally, catalyzes the attachment of threonine to tRNA(Thr) in a two-step reaction: L-threonine is first activated by ATP to form Thr-AMP and then transferred to the acceptor end of tRNA(Thr). Also edits incorrectly charged L-seryl-tRNA(Thr). The sequence is that of Threonine--tRNA ligase from Pyrobaculum arsenaticum (strain DSM 13514 / JCM 11321 / PZ6).